The chain runs to 173 residues: Ribosome maturation factor RimP (173 aa).

Belongs to the RimP family.

The protein resides in the cytoplasm. In terms of biological role, required for maturation of 30S ribosomal subunits. This Chlorobium phaeobacteroides (strain DSM 266 / SMG 266 / 2430) protein is Ribosome maturation factor RimP.